The following is a 327-amino-acid chain: Movement protein (327 aa).

The stretch at 297-327 (SASSSNTENELARVSQNIDLLKNKLKEICGE) forms a coiled coil.

This sequence belongs to the caulimoviridae movement protein family. As to quaternary structure, homotrimer, through the coiled-coil domain. Interacts with VAP. May interact (via N-terminus) with host prenylated Rab acceptor protein 1D (PRA1D).

The protein localises to the host cell junction. The protein resides in the host plasmodesma. In terms of biological role, transports viral genome to neighboring plant cells directly through plasmosdesmata, without any budding. The movement protein allows efficient cell to cell propagation, by bypassing the host cell wall barrier. Acts by forming tubules structures that increase the size exclusion limit (SEL) of plasmodesmata, thereby allowing viral ribonucleocapsids to spread directly to neighboring cells. The protein is Movement protein of Cauliflower mosaic virus (strain Strasbourg) (CaMV).